The primary structure comprises 354 residues: Uroporphyrinogen decarboxylase (354 aa).

Substrate is bound by residues 27–31, D77, Y154, T209, and H327; that span reads RQAGR.

It belongs to the uroporphyrinogen decarboxylase family. Homodimer.

It is found in the cytoplasm. The enzyme catalyses uroporphyrinogen III + 4 H(+) = coproporphyrinogen III + 4 CO2. Its pathway is porphyrin-containing compound metabolism; protoporphyrin-IX biosynthesis; coproporphyrinogen-III from 5-aminolevulinate: step 4/4. Its function is as follows. Catalyzes the decarboxylation of four acetate groups of uroporphyrinogen-III to yield coproporphyrinogen-III. The protein is Uroporphyrinogen decarboxylase of Actinobacillus succinogenes (strain ATCC 55618 / DSM 22257 / CCUG 43843 / 130Z).